Reading from the N-terminus, the 193-residue chain is Bcl-2-like protein 2 (193 aa).

Alanine 2 bears the N-acetylalanine mark. Residues 9-29 (DTRALVADFVGYKLRQKGYVC) carry the BH4 motif. Positions 85-104 (ELFQGGPNWGRLVAFFVFGA) match the BH1 motif. A BH2 motif is present at residues 136 to 151 (DWIHSSGGWAEFTALY).

Belongs to the Bcl-2 family. As to quaternary structure, interacts with HIF3A (via C-terminus domain). Interacts with BOP.

It is found in the mitochondrion membrane. Its function is as follows. Promotes cell survival. Blocks dexamethasone-induced apoptosis. Mediates survival of postmitotic Sertoli cells by suppressing death-promoting activity of BAX. The chain is Bcl-2-like protein 2 (BCL2L2) from Bos taurus (Bovine).